A 417-amino-acid chain; its full sequence is NADH-quinone oxidoreductase subunit D 2 (417 aa).

The protein belongs to the complex I 49 kDa subunit family. NDH-1 is composed of 14 different subunits. Subunits NuoB, C, D, E, F, and G constitute the peripheral sector of the complex.

The protein localises to the cell membrane. The catalysed reaction is a quinone + NADH + 5 H(+)(in) = a quinol + NAD(+) + 4 H(+)(out). In terms of biological role, NDH-1 shuttles electrons from NADH, via FMN and iron-sulfur (Fe-S) centers, to quinones in the respiratory chain. The immediate electron acceptor for the enzyme in this species is believed to be ubiquinone. Couples the redox reaction to proton translocation (for every two electrons transferred, four hydrogen ions are translocated across the cytoplasmic membrane), and thus conserves the redox energy in a proton gradient. The chain is NADH-quinone oxidoreductase subunit D 2 from Roseiflexus sp. (strain RS-1).